Reading from the N-terminus, the 270-residue chain is 3-methyl-2-oxobutanoate hydroxymethyltransferase (270 aa).

Mg(2+) is bound by residues Asp48 and Asp87. Residues 48–49, Asp87, and Lys117 each bind 3-methyl-2-oxobutanoate; that span reads DS. Glu119 is a Mg(2+) binding site. The active-site Proton acceptor is Glu186.

Belongs to the PanB family. Homodecamer; pentamer of dimers. Mg(2+) serves as cofactor.

It localises to the cytoplasm. It carries out the reaction 3-methyl-2-oxobutanoate + (6R)-5,10-methylene-5,6,7,8-tetrahydrofolate + H2O = 2-dehydropantoate + (6S)-5,6,7,8-tetrahydrofolate. The protein operates within cofactor biosynthesis; (R)-pantothenate biosynthesis; (R)-pantoate from 3-methyl-2-oxobutanoate: step 1/2. Its function is as follows. Catalyzes the reversible reaction in which hydroxymethyl group from 5,10-methylenetetrahydrofolate is transferred onto alpha-ketoisovalerate to form ketopantoate. The sequence is that of 3-methyl-2-oxobutanoate hydroxymethyltransferase from Synechococcus sp. (strain RCC307).